A 49-amino-acid polypeptide reads, in one-letter code: DNA-directed RNA polymerase subunit Rpo12 (49 aa).

Cysteine 11, cysteine 27, and cysteine 30 together coordinate Zn(2+).

This sequence belongs to the archaeal Rpo12/eukaryotic RPC10 RNA polymerase subunit family. Part of the RNA polymerase complex. It depends on Zn(2+) as a cofactor.

It localises to the cytoplasm. It carries out the reaction RNA(n) + a ribonucleoside 5'-triphosphate = RNA(n+1) + diphosphate. In terms of biological role, DNA-dependent RNA polymerase (RNAP) catalyzes the transcription of DNA into RNA using the four ribonucleoside triphosphates as substrates. The polypeptide is DNA-directed RNA polymerase subunit Rpo12 (Pyrococcus abyssi (strain GE5 / Orsay)).